A 326-amino-acid polypeptide reads, in one-letter code: Phenylserine dehydratase (326 aa).

As to quaternary structure, monomer. It depends on pyridoxal 5'-phosphate as a cofactor.

The enzyme catalyses L-threo-3-phenylserine = 3-phenylpyruvate + NH4(+). With respect to regulation, inhibited by phenylhydrazine, hydroxylamine, p-chloromercuribenzoate, and HgCl(2). This chain is Phenylserine dehydratase, found in Ralstonia pickettii (Burkholderia pickettii).